A 518-amino-acid polypeptide reads, in one-letter code: Zinc finger protein 449 (518 aa).

Residues 30–112 (RQRFRQFQYR…SLIEDLQREL (83 aa)) form the SCAN box domain. Residues 292–304 (NPTLGETPENSNL) show a composition bias toward polar residues. The tract at residues 292–325 (NPTLGETPENSNLEEPLNPKPHKKKSPGEKPHRC) is disordered. C2H2-type zinc fingers lie at residues 323–345 (HRCPQCGKCFARKSQLTGHQRIH), 351–373 (HKCPECGKRFLRSSDLYRHQRLH), 379–401 (YECTVCKKRFTRRSHLIGHQRTH), 407–429 (YKCLECGKSFCHGSSLKRHLKTH), 435–457 (HRCHNCGKSFSRLTALTLHQRTH), 463–485 (FKCNYCGKSFRQRPSLVIHLRIH), and 491–513 (YKCTHCSKSFRQRAGLIMHQVTH).

This sequence belongs to the krueppel C2H2-type zinc-finger protein family.

It localises to the nucleus. May be involved in transcriptional regulation. The protein is Zinc finger protein 449 (ZNF449) of Homo sapiens (Human).